The following is a 249-amino-acid chain: Elongation factor Ts (249 aa).

The tract at residues 82 to 85 is involved in Mg(2+) ion dislocation from EF-Tu; that stretch reads TDFV. Positions 215-249 are disordered; the sequence is QAGQLAPEAESTTETADATSETTTEKSSAKKKKKK. Residues 222 to 236 show a composition bias toward low complexity; sequence EAESTTETADATSET.

Belongs to the EF-Ts family.

It is found in the cytoplasm. In terms of biological role, associates with the EF-Tu.GDP complex and induces the exchange of GDP to GTP. It remains bound to the aminoacyl-tRNA.EF-Tu.GTP complex up to the GTP hydrolysis stage on the ribosome. In Rippkaea orientalis (strain PCC 8801 / RF-1) (Cyanothece sp. (strain PCC 8801)), this protein is Elongation factor Ts.